Consider the following 111-residue polypeptide: Ribonuclease P protein component (111 aa).

Belongs to the RnpA family. In terms of assembly, consists of a catalytic RNA component (M1 or rnpB) and a protein subunit.

It carries out the reaction Endonucleolytic cleavage of RNA, removing 5'-extranucleotides from tRNA precursor.. Its function is as follows. RNaseP catalyzes the removal of the 5'-leader sequence from pre-tRNA to produce the mature 5'-terminus. It can also cleave other RNA substrates such as 4.5S RNA. The protein component plays an auxiliary but essential role in vivo by binding to the 5'-leader sequence and broadening the substrate specificity of the ribozyme. The polypeptide is Ribonuclease P protein component (Mycoplasmopsis pulmonis (strain UAB CTIP) (Mycoplasma pulmonis)).